A 336-amino-acid chain; its full sequence is Holliday junction branch migration complex subunit RuvB (336 aa).

The interval 4 to 184 (ADRLIQPQVQ…FGIPLRLEFY (181 aa)) is large ATPase domain (RuvB-L). Residues Arg24, Gly65, Lys68, Thr69, Thr70, 131-133 (EDY), Arg174, Tyr184, and Arg221 contribute to the ATP site. Thr69 is a binding site for Mg(2+). A small ATPAse domain (RuvB-S) region spans residues 185 to 255 (NVADLTTIVT…VAEYALDLLD (71 aa)). A head domain (RuvB-H) region spans residues 258 to 336 (DQGFDYLDRK…HFSLVRPEKA (79 aa)). DNA is bound by residues Arg294, Arg313, and Arg318.

The protein belongs to the RuvB family. In terms of assembly, homohexamer. Forms an RuvA(8)-RuvB(12)-Holliday junction (HJ) complex. HJ DNA is sandwiched between 2 RuvA tetramers; dsDNA enters through RuvA and exits via RuvB. An RuvB hexamer assembles on each DNA strand where it exits the tetramer. Each RuvB hexamer is contacted by two RuvA subunits (via domain III) on 2 adjacent RuvB subunits; this complex drives branch migration. In the full resolvosome a probable DNA-RuvA(4)-RuvB(12)-RuvC(2) complex forms which resolves the HJ.

It localises to the cytoplasm. It catalyses the reaction ATP + H2O = ADP + phosphate + H(+). The RuvA-RuvB-RuvC complex processes Holliday junction (HJ) DNA during genetic recombination and DNA repair, while the RuvA-RuvB complex plays an important role in the rescue of blocked DNA replication forks via replication fork reversal (RFR). RuvA specifically binds to HJ cruciform DNA, conferring on it an open structure. The RuvB hexamer acts as an ATP-dependent pump, pulling dsDNA into and through the RuvAB complex. RuvB forms 2 homohexamers on either side of HJ DNA bound by 1 or 2 RuvA tetramers; 4 subunits per hexamer contact DNA at a time. Coordinated motions by a converter formed by DNA-disengaged RuvB subunits stimulates ATP hydrolysis and nucleotide exchange. Immobilization of the converter enables RuvB to convert the ATP-contained energy into a lever motion, pulling 2 nucleotides of DNA out of the RuvA tetramer per ATP hydrolyzed, thus driving DNA branch migration. The RuvB motors rotate together with the DNA substrate, which together with the progressing nucleotide cycle form the mechanistic basis for DNA recombination by continuous HJ branch migration. Branch migration allows RuvC to scan DNA until it finds its consensus sequence, where it cleaves and resolves cruciform DNA. The protein is Holliday junction branch migration complex subunit RuvB of Shewanella frigidimarina (strain NCIMB 400).